Consider the following 379-residue polypeptide: Alcohol dehydrogenase 2 (379 aa).

Residue cysteine 48 participates in Zn(2+) binding. 49–53 (HTDML) serves as a coordination point for NAD(+). Zn(2+) contacts are provided by histidine 69, cysteine 100, cysteine 103, cysteine 106, cysteine 114, and cysteine 178. Residues 203-208 (GLGAVG), aspartate 227, lysine 232, 275-277 (TGI), 298-300 (IGA), and 321-323 (TTF) contribute to the NAD(+) site.

The protein belongs to the zinc-containing alcohol dehydrogenase family. Class-IV subfamily. As to quaternary structure, homodimer. Zn(2+) serves as cofactor. In terms of tissue distribution, expressed in flowers and disk florets.

The enzyme catalyses (R,R)-chrysanthemol + NAD(+) = (1R,3R)-chrysanthemal + NADH + H(+). It catalyses the reaction nerol + NAD(+) = neral + NADH + H(+). It carries out the reaction (S)-(-)-citronellol + NAD(+) = (S)-(-)-citronellal + NADH + H(+). The catalysed reaction is perillyl alcohol + NAD(+) = perillyl aldehyde + NADH + H(+). The enzyme catalyses (6E)-8-hydroxygeraniol + NAD(+) = (6E)-8-hydroxygeranial + NADH + H(+). It catalyses the reaction (2E)-geraniol + NAD(+) = (2E)-geranial + NADH + H(+). Its pathway is isoprenoid biosynthesis. In terms of biological role, component of the monoterpenoid pyrethrins biosynthesis; pyrethrins are widely used plant-derived pesticide. Mediates the conversion of trans-chrysanthemol into trans-chrysanthemal. This is Alcohol dehydrogenase 2 from Tanacetum cinerariifolium (Dalmatian daisy).